A 222-amino-acid polypeptide reads, in one-letter code: Ornithine decarboxylase antizyme 1 (222 aa).

Belongs to the ODC antizyme family. In terms of assembly, interacts with ODC1 and thereby sterically blocks ODC homodimerization. Forms a ternary complex with PSMB4 and OAZ1 before PSMB4 is incorporated into the 20S proteasome. Interacts with AZIN2; this interaction disrupts the interaction between the antizyme and ODC1. Interacts with FAM171A1.

In terms of biological role, ornithine decarboxylase (ODC) antizyme protein that negatively regulates ODC activity and intracellular polyamine biosynthesis and uptake in response to increased intracellular polyamine levels. Binds to ODC monomers, inhibiting the assembly of the functional ODC homodimer, and targets the monomers for ubiquitin-independent proteolytic destruction by the 26S proteasome. Triggers ODC degradation by inducing the exposure of a cryptic proteasome-interacting surface of ODC. Stabilizes AZIN2 by interfering with its ubiquitination. Also inhibits cellular uptake of polyamines by inactivating the polyamine uptake transporter. SMAD1/OAZ1/PSMB4 complex mediates the degradation of the CREBBP/EP300 repressor SNIP1. Involved in the translocation of AZIN2 from ER-Golgi intermediate compartment (ERGIC) to the cytosol. The chain is Ornithine decarboxylase antizyme 1 (OAZ1) from Mesocricetus auratus (Golden hamster).